A 119-amino-acid polypeptide reads, in one-letter code: Phosphoribosyl-AMP cyclohydrolase (119 aa).

Asp-71 lines the Mg(2+) pocket. Cys-72 is a binding site for Zn(2+). 2 residues coordinate Mg(2+): Asp-73 and Asp-75. Residues Cys-90 and Cys-97 each coordinate Zn(2+).

Belongs to the PRA-CH family. In terms of assembly, homodimer. It depends on Mg(2+) as a cofactor. Requires Zn(2+) as cofactor.

The protein localises to the cytoplasm. The catalysed reaction is 1-(5-phospho-beta-D-ribosyl)-5'-AMP + H2O = 1-(5-phospho-beta-D-ribosyl)-5-[(5-phospho-beta-D-ribosylamino)methylideneamino]imidazole-4-carboxamide. Its pathway is amino-acid biosynthesis; L-histidine biosynthesis; L-histidine from 5-phospho-alpha-D-ribose 1-diphosphate: step 3/9. Functionally, catalyzes the hydrolysis of the adenine ring of phosphoribosyl-AMP. The chain is Phosphoribosyl-AMP cyclohydrolase from Brucella abortus (strain 2308).